The chain runs to 179 residues: O-acetyl-ADP-ribose deacetylase (179 aa).

The Macro domain occupies 1-175 (MTSRLQVIQG…LYARLLTQQG (175 aa)). Substrate is bound by residues 11-12 (DI), Asn-25, 33-35 (GVD), and 122-126 (STGVY). Catalysis depends on Asp-35, which acts as the Proton acceptor.

The protein belongs to the MacroD-type family. YmdB subfamily. Homodimer. Interacts with RNase III.

It catalyses the reaction 3''-O-acetyl-ADP-D-ribose + H2O = ADP-D-ribose + acetate + H(+). It carries out the reaction 2''-O-acetyl-ADP-D-ribose + H2O = ADP-D-ribose + acetate + H(+). Functionally, deacetylates O-acetyl-ADP ribose to yield ADP-ribose and free acetate. Down-regulates ribonuclease 3 (RNase III) activity. Acts by interacting directly with the region of the ribonuclease that is required for dimerization/activation. The protein is O-acetyl-ADP-ribose deacetylase of Salmonella newport (strain SL254).